The sequence spans 509 residues: Cytochrome P450 monooxygenase CYP512U6 (509 aa).

A helical transmembrane segment spans residues 12 to 29 (VFACVAVVIAIYAVRWYT). C446 contributes to the heme binding site.

This sequence belongs to the cytochrome P450 family. It depends on heme as a cofactor.

It localises to the membrane. It carries out the reaction ganoderate DM + reduced [NADPH--hemoprotein reductase] + O2 = hainanate A + oxidized [NADPH--hemoprotein reductase] + H2O + H(+). The catalysed reaction is ganoderate TR + reduced [NADPH--hemoprotein reductase] + O2 = ganoderate Jc + oxidized [NADPH--hemoprotein reductase] + H2O + H(+). The protein operates within secondary metabolite biosynthesis; terpenoid biosynthesis. Cytochrome P450 monooxygenase that hydroxylates the ganoderic acids DM and TR at the C-23 position to produce hainanic acid A and ganoderic acid Jc, respectively. This chain is Cytochrome P450 monooxygenase CYP512U6, found in Ganoderma lucidum (Ling zhi medicinal fungus).